The chain runs to 100 residues: Urease subunit gamma (100 aa).

It belongs to the urease gamma subunit family. Heterotrimer of UreA (gamma), UreB (beta) and UreC (alpha) subunits. Three heterotrimers associate to form the active enzyme.

It localises to the cytoplasm. The enzyme catalyses urea + 2 H2O + H(+) = hydrogencarbonate + 2 NH4(+). It functions in the pathway nitrogen metabolism; urea degradation; CO(2) and NH(3) from urea (urease route): step 1/1. The sequence is that of Urease subunit gamma from Paenarthrobacter aurescens (strain TC1).